A 244-amino-acid chain; its full sequence is U4/U6.U5 tri-snRNP-associated protein 3-like protein C162.01c (244 aa).

Composition is skewed to basic and acidic residues over residues 1–11 and 20–116; these read MSSSRSGEHRR and ESSR…RRDG. Disordered stretches follow at residues 1–192 and 223–244; these read MSSS…EDEA and KKTKYRQYMNRPGGFNRPLDNE. Phosphoserine is present on residues serine 121 and serine 140. The segment covering 126–182 has biased composition (basic and acidic residues); that stretch reads GLERKREHEKLQAPSPKEEEERPVDQGDKMDGVKEDKDGSLEVGKSHDAMTRTKSAE. Residues 183-192 show a composition bias toward acidic residues; sequence EEIVEQEDEA.

Belongs to the SNUT3 family. Part of a tri-snRNP complex.

The protein localises to the nucleus. In terms of biological role, may play a role in mRNA splicing. The chain is U4/U6.U5 tri-snRNP-associated protein 3-like protein C162.01c from Schizosaccharomyces pombe (strain 972 / ATCC 24843) (Fission yeast).